The primary structure comprises 864 residues: Leucine--tRNA ligase (864 aa).

A 'HIGH' region motif is present at residues 47-57 (PYPSGNLHMGH). The tract at residues 298–317 (SEQDRVADDRPKRGVATGGT) is disordered. Residues 299–309 (EQDRVADDRPK) show a composition bias toward basic and acidic residues. Residues 622-626 (KMSKS) carry the 'KMSKS' region motif. Lys625 lines the ATP pocket.

Belongs to the class-I aminoacyl-tRNA synthetase family.

It is found in the cytoplasm. It catalyses the reaction tRNA(Leu) + L-leucine + ATP = L-leucyl-tRNA(Leu) + AMP + diphosphate. This Synechococcus sp. (strain RCC307) protein is Leucine--tRNA ligase.